The following is a 305-amino-acid chain: Tetraspanin-12 (305 aa).

Topologically, residues 1–12 (MAREDSVKCLRC) are cytoplasmic. S-palmitoyl cysteine attachment occurs at residues Cys9 and Cys12. Residues 13–33 (LLYALNLLFWLMSISVLAVSA) traverse the membrane as a helical segment. Residues 34 to 59 (WMRDYLNNVLTLTAETRVEEAVILTY) lie on the Extracellular side of the membrane. The chain crosses the membrane as a helical span at residues 60-80 (FPVVHPVMIAVCCFLIIVGML). The Cytoplasmic segment spans residues 81–89 (GYCGTVKRN). A lipid anchor (S-palmitoyl cysteine) is attached at Cys83. Residues 90-110 (LLLLAWYFGSLLVIFCVELAC) traverse the membrane as a helical segment. At 111–224 (GVWTYEQEIM…RGTKQLQVLR (114 aa)) the chain is on the extracellular side. A helical membrane pass occupies residues 225–245 (FLGISIGVTQILAMILTITLL). Residues 246 to 305 (WALYYDRREPGTDQMMALKNDTTQHLPCHSVELLKPSLSRIFEHTSMANSFNTHFEMEEL) are Cytoplasmic-facing.

Belongs to the tetraspanin (TM4SF) family. As to quaternary structure, component of a complex, at least composed of TSPAN12, FZD4 and norrin (NDP). Interacts (when palmitoylated) with ADAM10. Interacts with MMP14/MT1-MMP. Palmitoylated; required for interaction with ADAM10. The precise position of palmitoylated residues is unclear and occurs either on Cys-9, Cys-12 and/or Cys-83.

It is found in the cell membrane. Its function is as follows. Regulator of cell surface receptor signal transduction. Plays a central role in retinal vascularization by regulating norrin (NDP) signal transduction. Acts in concert with norrin (NDP) to promote FZD4 multimerization and subsequent activation of FZD4, leading to promote accumulation of beta-catenin (CTNNB1) and stimulate LEF/TCF-mediated transcriptional programs. Suprisingly, it only activates the norrin (NDP)-dependent activation of FZD4, while it does not activate the Wnt-dependent activation of FZD4, suggesting the existence of a Wnt-independent signaling that also promote accumulation the beta-catenin (CTNNB1). Acts as a regulator of membrane proteinases such as ADAM10 and MMP14/MT1-MMP. Activates ADAM10-dependent cleavage activity of amyloid precursor protein (APP). Activates MMP14/MT1-MMP-dependent cleavage activity. This is Tetraspanin-12 (TSPAN12) from Bos taurus (Bovine).